The primary structure comprises 504 residues: Protein Dok-7 (504 aa).

A PH domain is found at 4 to 109; sequence AALVEGQVKL…WDARIRYALG (106 aa). An IRS-type PTB domain is found at 105–210; it reads RYALGEVHRF…RGISPTKGPF (106 aa). Disordered stretches follow at residues 210–229, 249–351, and 411–483; these read FGLR…TVEE, SHAG…YSSS, and LCLA…PHAG. Low complexity-rich tracts occupy residues 263 to 279 and 288 to 310; these read LSSS…SASS and SSSS…AGEA. The span at 331–341 shows a compositional bias: polar residues; the sequence is GRQSSSDSGIA.

Homodimer. Forms a heterotetramer composed of 2 DOK7 and 2 MUSK molecules which facilitates MUSK trans-autophosphorylation on tyrosine residue and activation. Interacts (via IRS-type PTB domain) with MUSK (via cytoplasmic part); requires MUSK phosphorylation. Preferentially expressed in skeletal muscle and heart. Present in thigh muscle, diaphragm and heart but not in the liver or spleen (at protein level).

Its subcellular location is the cell membrane. The protein resides in the synapse. Functionally, probable muscle-intrinsic activator of MUSK that plays an essential role in neuromuscular synaptogenesis. Acts in aneural activation of MUSK and subsequent acetylcholine receptor (AchR) clustering in myotubes. Induces autophosphorylation of MUSK. In Homo sapiens (Human), this protein is Protein Dok-7 (DOK7).